The primary structure comprises 481 residues: GTPase Obg (481 aa).

One can recognise an Obg domain in the interval 2–159 (TTFVDRVVLH…LDAVLELKSV (158 aa)). Residues 160 to 330 (ADIGLVGYPS…LMFAMGELVA (171 aa)) form the OBG-type G domain. GTP is bound by residues 166–173 (GYPSAGKS), 191–195 (FTTLV), 212–215 (DVPG), 282–285 (NKID), and 311–313 (SAA). Residues Ser-173 and Thr-193 each coordinate Mg(2+). The 79-residue stretch at 348-426 (PKAVDDAGFT…IGEREFDWHP (79 aa)) folds into the OCT domain. The tract at residues 440 to 481 (DQRLAEKTQRPSAAERLAARKARRQRPGDEPESDELDGDSGE) is disordered. The segment covering 469–481 (EPESDELDGDSGE) has biased composition (acidic residues).

It belongs to the TRAFAC class OBG-HflX-like GTPase superfamily. OBG GTPase family. In terms of assembly, monomer. The cofactor is Mg(2+).

The protein localises to the cytoplasm. In terms of biological role, an essential GTPase which binds GTP, GDP and possibly (p)ppGpp with moderate affinity, with high nucleotide exchange rates and a fairly low GTP hydrolysis rate. Plays a role in control of the cell cycle, stress response, ribosome biogenesis and in those bacteria that undergo differentiation, in morphogenesis control. The chain is GTPase Obg from Salinispora arenicola (strain CNS-205).